A 30-amino-acid chain; its full sequence is Cycloviolacin-O18 (30 aa).

The segment at residues 1–30 (GIPCGESCVYIPCTVTALAGCKCKSKVCYN) is a cross-link (cyclopeptide (Gly-Asn)). Intrachain disulfides connect Cys-4/Cys-21, Cys-8/Cys-23, and Cys-13/Cys-28.

This is a cyclic peptide. In terms of tissue distribution, expressed in leaves, petals and petioles but not in roots and runners (at protein level).

In terms of biological role, probably participates in a plant defense mechanism. This Viola odorata (Sweet violet) protein is Cycloviolacin-O18.